The sequence spans 477 residues: Transmembrane and coiled-coil domain protein 3 (477 aa).

A disordered region spans residues 1–24 (MPGSDTALTVDRTYSDPGRHHRCK). At Ser-46 the chain carries Phosphoserine. 2 coiled-coil regions span residues 63–83 (KVKL…EQIK) and 112–149 (KQVF…NGVT). Residues 234-280 (ASPRAYGGSATIVNKPKYGSDDECSSGTSGSADSNGNQSFGAGGTST) are disordered. Ser-253 is modified (phosphoserine). Positions 258 to 280 (SSGTSGSADSNGNQSFGAGGTST) are enriched in polar residues. Residues 284–398 (QGKIAKIMEE…KLELHQQEQQ (115 aa)) are a coiled coil. Helical transmembrane passes span 409 to 429 (VLLG…LVCV) and 450 to 470 (FFAV…LCAI).

This sequence belongs to the TEX28 family. In terms of assembly, may form homodimers and heterodimers with TMCC2 or TMCC3 via the coiled-coil domains. Interacts with ribosomal proteins RPL4 and RPS6.

It localises to the endoplasmic reticulum membrane. In Mus musculus (Mouse), this protein is Transmembrane and coiled-coil domain protein 3.